The primary structure comprises 280 residues: B3 domain-containing protein At5g25470 (280 aa).

The TF-B3 1 DNA-binding region spans 20-114; that stretch reads WKSLSPGQNW…FLEVQIFKND (95 aa). The disordered stretch occupies residues 122–153; the sequence is PPEVEPETEPFHPTTPKNSHKETTTASASASA. A DNA-binding region (TF-B3 2) is located at residues 183–276; the sequence is YFVKTLTKGN…ELVTAVRVHF (94 aa).

The protein resides in the nucleus. In Arabidopsis thaliana (Mouse-ear cress), this protein is B3 domain-containing protein At5g25470.